The primary structure comprises 695 residues: Amphiphysin (695 aa).

Coiled coils occupy residues 10 to 83 (AKNV…SLHE) and 144 to 191 (DYDS…QEEL). The 217-residue stretch at 24-240 (VLQKLGKADE…MTKLGDQHAD (217 aa)) folds into the BAR domain. 2 disordered regions span residues 244-312 (TIQG…VTPT) and 486-617 (GAPG…EASQ). Phosphoserine is present on Ser252. Phosphothreonine is present on Thr260. Residues 261–274 (PSPPEEPSPLPSPT) are compositionally biased toward pro residues. Residues Ser262, Ser268, Ser272, and Ser276 each carry the phosphoserine modification. Thr280 carries the phosphothreonine modification. Phosphoserine is present on residues Ser506 and Ser638. The region spanning 622–695 (GFLYKVETLH…FPENFTRRLD (74 aa)) is the SH3 domain.

As to quaternary structure, heterodimer with BIN1. Binds SH3GLB1. Interacts with REPS1 and SGIP1. Binds AP2A2. Interacts with AP2B1. Interacts with DNM1 and SYNJ1. In terms of tissue distribution, neurons, certain endocrine cell types and spermatocytes.

Its subcellular location is the cytoplasmic vesicle. It localises to the secretory vesicle. It is found in the synaptic vesicle membrane. The protein resides in the cytoplasm. The protein localises to the cytoskeleton. Its function is as follows. May participate in mechanisms of regulated exocytosis in synapses and certain endocrine cell types. May control the properties of the membrane associated cytoskeleton. This is Amphiphysin (AMPH) from Homo sapiens (Human).